A 126-amino-acid polypeptide reads, in one-letter code: Large ribosomal subunit protein bL17 (126 aa).

The protein belongs to the bacterial ribosomal protein bL17 family. Part of the 50S ribosomal subunit. Contacts protein L32.

The sequence is that of Large ribosomal subunit protein bL17 from Coxiella burnetii (strain CbuK_Q154) (Coxiella burnetii (strain Q154)).